A 48-amino-acid polypeptide reads, in one-letter code: MARYRCCRSPSRSRCRRRRRRFYRRRRRCHRRRRRCCRRRYTRRCKRY.

The protein belongs to the protamine P1 family. As to quaternary structure, cross-linked by interchain disulfide bonds around the DNA-helix. As to expression, testis.

The protein resides in the nucleus. It localises to the chromosome. Functionally, protamines substitute for histones in the chromatin of sperm during the haploid phase of spermatogenesis. They compact sperm DNA into a highly condensed, stable and inactive complex. The sequence is that of Sperm protamine P1 (PRM1) from Cavia porcellus (Guinea pig).